Reading from the N-terminus, the 439-residue chain is Keratin, type I cytoskeletal 40 (439 aa).

Residues 1–89 are head; that stretch reads MASDGSPSCC…CEEGSFNSNE (89 aa). The region spanning 89–400 is the IF rod domain; sequence EKETMQFLND…GLLEKEDSRL (312 aa). Residues 90–124 form a coil 1A region; sequence KETMQFLNDRLASYLERVRSLEENNAELECRIREQ. Positions 125-135 are linker 1; sequence CEPNAPLVCPD. A coil 1B region spans residues 136–236; it reads YQRYFDTIEE…HEEEVNLLRE (101 aa). Residues 237–252 form a linker 12 region; sequence QLGDRLSVELDTAPTV. Residues 253-396 are coil 2; that stretch reads DLNKVLDEMR…NTYRGLLEKE (144 aa). The tract at residues 397–439 is tail; sequence DSRLPCNPGSGAPMPNSTCEPCSNSMCEPCSAYVICTVENCCA.

Belongs to the intermediate filament family. In terms of assembly, heterotetramer of two type I and two type II keratins.

May play a role in late hair differentiation. This is Keratin, type I cytoskeletal 40 (Krt40) from Mus musculus (Mouse).